We begin with the raw amino-acid sequence, 492 residues long: Probable cytochrome P450 313a3 (492 aa).

Position 438 (cysteine 438) interacts with heme.

This sequence belongs to the cytochrome P450 family. Heme serves as cofactor.

The protein localises to the endoplasmic reticulum membrane. Its subcellular location is the microsome membrane. Functionally, may be involved in the metabolism of insect hormones and in the breakdown of synthetic insecticides. The polypeptide is Probable cytochrome P450 313a3 (Cyp313a3) (Drosophila melanogaster (Fruit fly)).